The chain runs to 507 residues: Bifunctional purine biosynthesis protein PurH (507 aa).

An MGS-like domain is found at 1–144 (MKRALLSVSD…KNSDSVWAVV (144 aa)).

This sequence belongs to the PurH family.

The catalysed reaction is (6R)-10-formyltetrahydrofolate + 5-amino-1-(5-phospho-beta-D-ribosyl)imidazole-4-carboxamide = 5-formamido-1-(5-phospho-D-ribosyl)imidazole-4-carboxamide + (6S)-5,6,7,8-tetrahydrofolate. The enzyme catalyses IMP + H2O = 5-formamido-1-(5-phospho-D-ribosyl)imidazole-4-carboxamide. Its pathway is purine metabolism; IMP biosynthesis via de novo pathway; 5-formamido-1-(5-phospho-D-ribosyl)imidazole-4-carboxamide from 5-amino-1-(5-phospho-D-ribosyl)imidazole-4-carboxamide (10-formyl THF route): step 1/1. The protein operates within purine metabolism; IMP biosynthesis via de novo pathway; IMP from 5-formamido-1-(5-phospho-D-ribosyl)imidazole-4-carboxamide: step 1/1. This is Bifunctional purine biosynthesis protein PurH from Lacticaseibacillus paracasei (strain ATCC 334 / BCRC 17002 / CCUG 31169 / CIP 107868 / KCTC 3260 / NRRL B-441) (Lactobacillus paracasei).